We begin with the raw amino-acid sequence, 477 residues long: Aspartyl/glutamyl-tRNA(Asn/Gln) amidotransferase subunit B (477 aa).

It belongs to the GatB/GatE family. GatB subfamily. Heterotrimer of A, B and C subunits.

The enzyme catalyses L-glutamyl-tRNA(Gln) + L-glutamine + ATP + H2O = L-glutaminyl-tRNA(Gln) + L-glutamate + ADP + phosphate + H(+). The catalysed reaction is L-aspartyl-tRNA(Asn) + L-glutamine + ATP + H2O = L-asparaginyl-tRNA(Asn) + L-glutamate + ADP + phosphate + 2 H(+). Allows the formation of correctly charged Asn-tRNA(Asn) or Gln-tRNA(Gln) through the transamidation of misacylated Asp-tRNA(Asn) or Glu-tRNA(Gln) in organisms which lack either or both of asparaginyl-tRNA or glutaminyl-tRNA synthetases. The reaction takes place in the presence of glutamine and ATP through an activated phospho-Asp-tRNA(Asn) or phospho-Glu-tRNA(Gln). This Ureaplasma urealyticum serovar 10 (strain ATCC 33699 / Western) protein is Aspartyl/glutamyl-tRNA(Asn/Gln) amidotransferase subunit B.